A 162-amino-acid polypeptide reads, in one-letter code: MKVLQMFFCVILLCVTSVLVEAKSTTKGDETASKRNFAQFAAMTYHTTHRWPKKYVGYGCYCGLGGYGIPVDPIDECCKTHDACYKKVEDSGICSYSWAIYLTIYKRKGGAECSEDNEKCQMEVCKCDSVAAKCLGKYKDIFNEKYAGYDKKGKCDPSFTLS.

An N-terminal signal peptide occupies residues 1–22 (MKVLQMFFCVILLCVTSVLVEA). Positions 23–35 (KSTTKGDETASKR) are excised as a propeptide. Cystine bridges form between Cys-60-Cys-155, Cys-62-Cys-78, Cys-77-Cys-134, Cys-84-Cys-127, Cys-94-Cys-120, and Cys-113-Cys-125. Residues Tyr-61, Gly-63, and Gly-65 each coordinate Ca(2+). The active site involves His-81. Asp-82 is a Ca(2+) binding site. Asp-128 is an active-site residue.

Belongs to the phospholipase A2 family. Group I subfamily. D49 sub-subfamily. It depends on Ca(2+) as a cofactor. As to expression, expressed both outside and in acontia, a specialised envenomation structure laden with batteries of venom-containing nematocysts found only in the superfamily Metridioidea.

The protein resides in the secreted. Its subcellular location is the nematocyst. The catalysed reaction is a 1,2-diacyl-sn-glycero-3-phosphocholine + H2O = a 1-acyl-sn-glycero-3-phosphocholine + a fatty acid + H(+). Functionally, PLA2 catalyzes the calcium-dependent hydrolysis of the 2-acyl groups in 3-sn-phosphoglycerides. The sequence is that of Phospholipase A2 from Calliactis polypus (Hermit crab anemone).